A 159-amino-acid polypeptide reads, in one-letter code: Ribosomal RNA large subunit methyltransferase H (159 aa).

Residues leucine 76, glycine 108, and 127 to 132 (FSKMTL) contribute to the S-adenosyl-L-methionine site.

Belongs to the RNA methyltransferase RlmH family. As to quaternary structure, homodimer.

The protein localises to the cytoplasm. It catalyses the reaction pseudouridine(1915) in 23S rRNA + S-adenosyl-L-methionine = N(3)-methylpseudouridine(1915) in 23S rRNA + S-adenosyl-L-homocysteine + H(+). Functionally, specifically methylates the pseudouridine at position 1915 (m3Psi1915) in 23S rRNA. This Bacillus thuringiensis subsp. konkukian (strain 97-27) protein is Ribosomal RNA large subunit methyltransferase H.